A 269-amino-acid polypeptide reads, in one-letter code: 5'-nucleotidase SurE (269 aa).

A divalent metal cation contacts are provided by D11, D12, S43, and N101.

Belongs to the SurE nucleotidase family. A divalent metal cation serves as cofactor.

Its subcellular location is the cytoplasm. It carries out the reaction a ribonucleoside 5'-phosphate + H2O = a ribonucleoside + phosphate. Its function is as follows. Nucleotidase that shows phosphatase activity on nucleoside 5'-monophosphates. This is 5'-nucleotidase SurE from Synechococcus sp. (strain CC9605).